The following is a 294-amino-acid chain: Maltose/maltodextrin import ATP-binding protein MalK (294 aa).

Residues 4 to 233 (VQLRNVTKAW…PADRFVAGFI (230 aa)) enclose the ABC transporter domain. Residue 36–43 (GPSGCGKS) coordinates ATP.

The protein belongs to the ABC transporter superfamily. Maltooligosaccharide importer (TC 3.A.1.1.1) family. In terms of assembly, the complex is composed of two ATP-binding proteins (MalK), two transmembrane proteins (MalG and MalK) and a solute-binding protein (MalE).

It localises to the cell inner membrane. It carries out the reaction D-maltose(out) + ATP + H2O = D-maltose(in) + ADP + phosphate + H(+). Part of the ABC transporter complex MalEFGK involved in maltose/maltodextrin import. Responsible for energy coupling to the transport system. This Klebsiella aerogenes (Enterobacter aerogenes) protein is Maltose/maltodextrin import ATP-binding protein MalK.